Reading from the N-terminus, the 412-residue chain is Major facilitator superfamily domain-containing protein 3 (412 aa).

12 helical membrane-spanning segments follow: residues 10-30 (GLYL…PILL), 40-60 (VGLT…APLV), 68-88 (VWLT…AVLP), 99-119 (TTVM…DVAL), 152-172 (GGLL…LLAA), 173-193 (TYWL…LPWP), 204-224 (YLLQ…FVLT), 252-272 (LWSG…GGAL), 291-311 (LGSL…GASV), 320-340 (AVLL…TATF), 361-381 (FLAT…GVLA), and 384-404 (LGPH…VLDL).

It belongs to the major facilitator superfamily. In brain, expressed in the cortex, striatum, hippocampus, hypothalamus, thalamus and cerebellum (at protein level). Widely expressed with highest levels in kidney and liver.

It is found in the membrane. This Mus musculus (Mouse) protein is Major facilitator superfamily domain-containing protein 3 (Mfsd3).